The sequence spans 90 residues: uncharacterized protein (90 aa).

Residues 25-90 (GEAAYNSPTN…PPIAPPPILD (66 aa)) form a disordered region. Composition is skewed to polar residues over residues 30–54 (NSPT…TESV) and 65–79 (NDQT…SNVN).

This is an uncharacterized protein from Bacillus subtilis (strain 168).